The following is a 345-amino-acid chain: Transmembrane protein 144 homolog (345 aa).

Helical transmembrane passes span 3-23, 32-52, 61-81, 84-104, 120-140, 193-213, 233-253, 265-285, 293-313, and 324-344; these read IAVG…MFVP, GIFV…VVYS, PLAM…VPIM, IGIG…GWAA, PFLN…FSQI, LAII…VPVI, VFSH…GYVI, LVGP…SWFV, AVSF…WSVF, and LRLL…VGVS.

It belongs to the TMEM144 family.

Its subcellular location is the membrane. In Caenorhabditis elegans, this protein is Transmembrane protein 144 homolog.